The primary structure comprises 525 residues: MFGSATANPPAQRNLPSGDGDGGAPDAQAPYLLEISHVSKGFPGVVALNDVQLRVRPGSVLALMGENGAGKSTLMKIIAGIYQPDAGEIRLRGKPVSFDTPLSALQAGIAMIHQELNLMPFMSIAENIWIGREQLNGLHMVDHREMHRCTAELLERLRIKLDPEELVGTLSIAERQMVEIAKAVSYNSDVLIMDEPTSAITETEVAHLFSIISDLRAQGKGIIYITHKMNEVFEIADEVAVFRDGAYIGLQRADSMDGDSLITMMVGRELTQLFPEREKPAGDVLLSVNRLSLNGIFKDVSFDLRAGEVLGIAGLMGSGRTNVAETLFGITPSDSGEVRFDGKTVHIGDPHQAIELGFALLTEDRKLTGLFPCLSVMENMEMAVLANYAGNGFVQQKALRSQCEDMCKKLRVKTPSLEQCIDTLSGGNQQKALLARWLMTNPKVLILDEPTRGIDVGAKVEIYRLISLLASEGMAVIMISSELPEVLGMSDRVMVMHEGEMMGILDRSEATQEKVMHLASGHKVH.

Positions 1 to 15 (MFGSATANPPAQRNL) are enriched in polar residues. The interval 1–23 (MFGSATANPPAQRNLPSGDGDGG) is disordered. 2 consecutive ABC transporter domains span residues 33-269 (LEIS…VGRE) and 279-523 (KPAG…SGHK). 65–72 (GENGAGKS) is a binding site for ATP.

It belongs to the ABC transporter superfamily. Carbohydrate importer 2 (CUT2) (TC 3.A.1.2) family.

It localises to the cell inner membrane. The enzyme catalyses D-ribose(out) + ATP + H2O = D-ribose(in) + ADP + phosphate + H(+). It catalyses the reaction D-galactose(out) + ATP + H2O = D-galactose(in) + ADP + phosphate + H(+). Part of an ABC transporter complex involved in carbohydrate import. Could be involved in ribose, galactose and/or methyl galactoside import. Responsible for energy coupling to the transport system. This chain is Putative ribose/galactose/methyl galactoside import ATP-binding protein, found in Pseudomonas syringae pv. syringae (strain B728a).